The primary structure comprises 607 residues: Frizzled and smoothened-like protein J (607 aa).

Positions 1 to 26 (MVSNKNLLPIIYIFFIILYFGDVAKS) are cleaved as a signal peptide. At 27–247 (QYFPLDKGAT…QWRNIYRLSD (221 aa)) the chain is on the extracellular side. Positions 32–182 (DKGATCQKYR…LSYTNTCENT (151 aa)) constitute an FZ domain. Disulfide bonds link Cys37–Cys108, Cys50–Cys101, and Cys127–Cys179. N-linked (GlcNAc...) asparagine glycosylation is found at Asn63, Asn133, Asn155, Asn164, Asn190, and Asn222. A helical membrane pass occupies residues 248-268 (VLSILSCILTLFLVITLGIIN). Residues 269–276 (PKVSRFDK) lie on the Cytoplasmic side of the membrane. Residues 277-297 (INVMLLSSIFLQAFSGALMTF) traverse the membrane as a helical segment. Asn298 carries N-linked (GlcNAc...) asparagine glycosylation. Topologically, residues 298–330 (NGTENTLCPEDGRFASYIDRMCVATGFLLHGSS) are extracellular. The helical transmembrane segment at 331-351 (LLVVQWWCVLSFEVWFTIFQV) threads the bilayer. Over 352-358 (GKKQKDR) the chain is Cytoplasmic. Residues 359–379 (FIYYLVASLIIAWIPPIVSIS) form a helical membrane-spanning segment. Residues 380–401 (KNEYSGGPANPFCWLTTFNYRR) lie on the Extracellular side of the membrane. The helical transmembrane segment at 402–422 (FAFWLPMGIFLCLGGVFLILL) threads the bilayer. Residues 423-451 (MREIYVIVSGNVQSTKESRFKVLKMEAKP) lie on the Cytoplasmic side of the membrane. The helical transmembrane segment at 452-472 (IISLIMYFSCLLYLFIYDQWI) threads the bilayer. Residues 473 to 508 (NNHMHVYTDSIPSYALCLLTSTSTNDCLLKAPDITG) lie on the Extracellular side of the membrane. Residues 509 to 529 (LGYFIYSIRVFGVYAFIIYGI) traverse the membrane as a helical segment. Topologically, residues 530-607 (SKKTLQIWKY…VELDSNSDAL (78 aa)) are cytoplasmic. A Lys-Thr-X-X-X-Trp motif, mediates interaction with the PDZ domain of Dvl family members motif is present at residues 532–537 (KTLQIW). A compositionally biased stretch (low complexity) spans 559–575 (TAKSSNSNNSSTTNNIS). A disordered region spans residues 559-607 (TAKSSNSNNSSTTNNISVKASSNMEYETRQENENGDSQSVELDSNSDAL). A compositionally biased stretch (polar residues) spans 593–607 (GDSQSVELDSNSDAL).

It belongs to the G-protein coupled receptor Fz/Smo family.

It is found in the membrane. In Dictyostelium discoideum (Social amoeba), this protein is Frizzled and smoothened-like protein J (fslJ-1).